A 400-amino-acid chain; its full sequence is Argininosuccinate synthase (400 aa).

8–16 serves as a coordination point for ATP; that stretch reads AYSGGLDTS. Tyr87 serves as a coordination point for L-citrulline. Gly117 serves as a coordination point for ATP. The L-aspartate site is built by Thr119, Asn123, and Asp124. Asn123 contributes to the L-citrulline binding site. 4 residues coordinate L-citrulline: Arg127, Ser175, Glu260, and Tyr272.

The protein belongs to the argininosuccinate synthase family. Type 1 subfamily. In terms of assembly, homotetramer.

Its subcellular location is the cytoplasm. It catalyses the reaction L-citrulline + L-aspartate + ATP = 2-(N(omega)-L-arginino)succinate + AMP + diphosphate + H(+). It functions in the pathway amino-acid biosynthesis; L-arginine biosynthesis; L-arginine from L-ornithine and carbamoyl phosphate: step 2/3. This is Argininosuccinate synthase from Mycobacterium sp. (strain JLS).